The following is an 885-amino-acid chain: Leucine--tRNA ligase (885 aa).

The 'HIGH' region motif lies at 48-58 (PYPSGKLHMGH). A 'KMSKS' region motif is present at residues 639–643 (TMSKS). ATP is bound at residue Lys-642.

It belongs to the class-I aminoacyl-tRNA synthetase family.

Its subcellular location is the cytoplasm. It carries out the reaction tRNA(Leu) + L-leucine + ATP = L-leucyl-tRNA(Leu) + AMP + diphosphate. The sequence is that of Leucine--tRNA ligase from Bordetella avium (strain 197N).